The chain runs to 473 residues: Eukaryotic translation initiation factor 2 subunit gamma (473 aa).

A tr-type G domain is found at 40–250 (QATINIGTIG…AICNIAPPNY (211 aa)). Positions 49-56 (GHVAHGKS) are G1. 52-57 (AHGKSS) is a binding site for GTP. A G2 region spans residues 77 to 81 (NITIK). The interval 135 to 138 (DCPG) is G3. Residues 193 to 196 (NKMD) and 228 to 230 (SAQ) each bind GTP. The segment at 193-196 (NKMD) is G4. The tract at residues 228–230 (SAQ) is G5. The segment at 458–470 (GKVRSGGTLCEVV) is interacts with CDC123.

This sequence belongs to the TRAFAC class translation factor GTPase superfamily. Classic translation factor GTPase family. EIF2G subfamily. In terms of assembly, eukaryotic translation initiation factor 2 eIF2 is a heterotrimeric complex composed of an alpha, a beta and a gamma subunit. The factors eIF-1, eIF-2, eIF-3, TIF5/eIF-5 and methionyl-tRNAi form a multifactor complex (MFC) that may bind to the 40S ribosome.

It localises to the cytoplasm. Its subcellular location is the cytosol. It carries out the reaction GTP + H2O = GDP + phosphate + H(+). In terms of biological role, as a subunit of eukaryotic initiation factor 2 eIF2, involved in the early steps of protein synthesis. In the presence of GTP, eIF-2 forms a ternary complex with initiator tRNA Met-tRNAi and then recruits the 40S ribosomal complex and initiation factors eIF-1, eIF-1A and eIF-3 to form the 43S pre-initiation complex (43S PIC), a step that determines the rate of protein translation. The 43S PIC binds to mRNA and scans downstream to the initiation codon, where it forms a 48S initiation complex by codon-anticodon base pairing. This leads to the displacement of eIF-1 to allow GTPase-activating protein (GAP) eIF-5-mediated hydrolysis of eIF2-bound GTP. Hydrolysis of GTP and release of Pi, which makes GTP hydrolysis irreversible, causes the release of the eIF-2-GDP binary complex from the 40S subunit, an event that is essential for the subsequent joining of the 60S ribosomal subunit to form an elongation-competent 80S ribosome. In order for eIF-2 to recycle and catalyze another round of initiation, the GDP bound to eIF-2 must be exchanged with GTP by way of a reaction catalyzed by GDP-GTP exchange factor (GEF) eIF-2B. The sequence is that of Eukaryotic translation initiation factor 2 subunit gamma from Cryptococcus neoformans var. grubii serotype A (strain H99 / ATCC 208821 / CBS 10515 / FGSC 9487) (Filobasidiella neoformans var. grubii).